Reading from the N-terminus, the 223-residue chain is Chorismate dehydratase (223 aa).

The protein belongs to the MqnA/MqnD family. MqnA subfamily.

The enzyme catalyses chorismate = 3-[(1-carboxyvinyl)-oxy]benzoate + H2O. It functions in the pathway quinol/quinone metabolism; menaquinone biosynthesis. Its function is as follows. Catalyzes the dehydration of chorismate into 3-[(1-carboxyvinyl)oxy]benzoate, a step in the biosynthesis of menaquinone (MK, vitamin K2). The polypeptide is Chorismate dehydratase (Campylobacter jejuni subsp. jejuni serotype O:23/36 (strain 81-176)).